A 110-amino-acid polypeptide reads, in one-letter code: UPF0060 membrane protein Pcryo_1341 (110 aa).

The next 4 membrane-spanning stretches (helical) occupy residues 7-27 (VGLF…PYLW), 33-53 (SIWL…LLTL), 63-83 (AAYG…VDGI), and 87-107 (TWDI…MFAP).

It belongs to the UPF0060 family.

The protein resides in the cell inner membrane. The sequence is that of UPF0060 membrane protein Pcryo_1341 from Psychrobacter cryohalolentis (strain ATCC BAA-1226 / DSM 17306 / VKM B-2378 / K5).